Here is a 129-residue protein sequence, read N- to C-terminus: Small ribosomal subunit protein uS11 (129 aa).

It belongs to the universal ribosomal protein uS11 family. In terms of assembly, part of the 30S ribosomal subunit. Interacts with proteins S7 and S18. Binds to IF-3.

Located on the platform of the 30S subunit, it bridges several disparate RNA helices of the 16S rRNA. Forms part of the Shine-Dalgarno cleft in the 70S ribosome. The sequence is that of Small ribosomal subunit protein uS11 from Buchnera aphidicola subsp. Baizongia pistaciae (strain Bp).